Consider the following 340-residue polypeptide: Phospho-N-acetylmuramoyl-pentapeptide-transferase (340 aa).

Transmembrane regions (helical) follow at residues 3–23 (MSLIAGVAAFVLTVLAMPHFI), 53–73 (GGTVFLVVAILISLIFNFHVF), 79–99 (AYGATAGILFVILIYGIIGFL), 119–139 (MALQIVAGLLFYFIHVLPSGT), 144–164 (IGGLTIQLGVFYVLFVLFWIV), 176–196 (IDGLASVSVVISLIAYGIIAF), 200–220 (ELAILTIIITMIGALLGFFVF), 227–247 (VFMGDVGSLSLGAMLAVISIA), 250–270 (VEWTLLLIGVVYVLETASVML), and 315–335 (VDAFLWTIGALASSITLWMVL).

It belongs to the glycosyltransferase 4 family. MraY subfamily. It depends on Mg(2+) as a cofactor.

Its subcellular location is the cell membrane. It carries out the reaction UDP-N-acetyl-alpha-D-muramoyl-L-alanyl-gamma-D-glutamyl-L-lysyl-D-alanyl-D-alanine + di-trans,octa-cis-undecaprenyl phosphate = Mur2Ac(oyl-L-Ala-gamma-D-Glu-L-Lys-D-Ala-D-Ala)-di-trans,octa-cis-undecaprenyl diphosphate + UMP. It functions in the pathway cell wall biogenesis; peptidoglycan biosynthesis. Its function is as follows. Catalyzes the initial step of the lipid cycle reactions in the biosynthesis of the cell wall peptidoglycan: transfers peptidoglycan precursor phospho-MurNAc-pentapeptide from UDP-MurNAc-pentapeptide onto the lipid carrier undecaprenyl phosphate, yielding undecaprenyl-pyrophosphoryl-MurNAc-pentapeptide, known as lipid I. This is Phospho-N-acetylmuramoyl-pentapeptide-transferase from Streptococcus thermophilus (strain ATCC BAA-250 / LMG 18311).